We begin with the raw amino-acid sequence, 115 residues long: uncharacterized protein (115 aa).

The Cytoplasmic segment spans residues 1–11; it reads MKLTKEKKNDC. The chain crosses the membrane as a helical span at residues 12–32; that stretch reads LVGVSYIPPLNFFTLTFLFLL. The Extracellular portion of the chain corresponds to 33–52; sequence RIEKVHLSLSLSLSLSLRFY. Residues 53–73 traverse the membrane as a helical segment; the sequence is YFHNVCYPSLFLFFCFVIPFF. The Cytoplasmic portion of the chain corresponds to 74 to 78; it reads YSVRF. Residues 79–98 traverse the membrane as a helical segment; the sequence is ILLYLHILRSFYELNILLLY. Residues 99–115 lie on the Extracellular side of the membrane; the sequence is GAENSRRQSPPGYYVIR.

Its subcellular location is the membrane. This is an uncharacterized protein from Saccharomyces cerevisiae (strain ATCC 204508 / S288c) (Baker's yeast).